The primary structure comprises 387 residues: MNELDATDPSDWNQTKIPSLKGLDSSLRCLICHEYFRAPLITSCSHTFCSFCIRDYLREHPMCPACRAPEQESRLRKNTILEEILESFKVIRPTLFEFLKVENVPKPVLQAPETVIAQDSASGDEEWEDDLASNSSPASIAKKTSRDSKKRKREDLVHCPACSNLVPHNQINQHLDSCLNSPSSPSSSSSPYKNKDNSKSNSLLSFKTDDDSITKRRLRSFNSADELPLKDRVRLPKLTYALLSESKIRSKLSEMGLPTDGHKQLLQRRHAKWVTLYNSNLDQKQPVSKRNLIRQLIDWERVQSKSIGVEKEKLGGGDWEKAYAEDFADLINRAKQSTTNKNDSLRNTAVESSTEPSTSNGFPATSVSPPLTIDLTNSQTGSDGPQS.

An RING-type zinc finger spans residues 29 to 67 (CLICHEYFRAPLITSCSHTFCSFCIRDYLREHPMCPACR). Residues 119-153 (DSASGDEEWEDDLASNSSPASIAKKTSRDSKKRKR) are disordered. Positions 122–131 (SGDEEWEDDL) are enriched in acidic residues. The UBZ4-type zinc finger occupies 156-183 (LVHCPACSNLVPHNQINQHLDSCLNSPS). Positions 159, 162, 174, and 178 each coordinate Zn(2+). The interval 174-206 (HLDSCLNSPSSPSSSSSPYKNKDNSKSNSLLSF) is disordered. Residues 177 to 192 (SCLNSPSSPSSSSSPY) show a composition bias toward low complexity. One can recognise an SAP domain in the interval 240–274 (YALLSESKIRSKLSEMGLPTDGHKQLLQRRHAKWV). Residues 335 to 387 (KQSTTNKNDSLRNTAVESSTEPSTSNGFPATSVSPPLTIDLTNSQTGSDGPQS) are disordered.

The protein belongs to the RAD18 family. As to quaternary structure, interacts with E2 ubc2, forming a complex with ubiquitin ligase activity.

Its subcellular location is the nucleus. The catalysed reaction is S-ubiquitinyl-[E2 ubiquitin-conjugating enzyme]-L-cysteine + [acceptor protein]-L-lysine = [E2 ubiquitin-conjugating enzyme]-L-cysteine + N(6)-ubiquitinyl-[acceptor protein]-L-lysine.. The protein operates within protein modification; protein ubiquitination. E3 RING-finger protein, member of the UBC2/RAD6 epistasis group. Associates to the E2 ubiquitin conjugating enzyme ubc2/rad6 to form the ubc2-rad18 ubiquitin ligase complex involved in postreplicative repair (PRR) of damaged DNA. This Schizosaccharomyces pombe (strain 972 / ATCC 24843) (Fission yeast) protein is Postreplication repair E3 ubiquitin-protein ligase rad18 (rhp18).